Here is a 399-residue protein sequence, read N- to C-terminus: Glutamine synthetase 1, mitochondrial (399 aa).

The transit peptide at 1–27 (MALRVAGLFLKKELVAPATQQLRLLRT) directs the protein to the mitochondrion. Residues 62–143 (VQATYLWIDG…VLCDTYSADG (82 aa)) form the GS beta-grasp domain. The GS catalytic domain maps to 150–399 (KRAAFQAAID…AIVRTCLLNE (250 aa)).

It belongs to the glutamine synthetase family. As to quaternary structure, homooctamer.

It localises to the mitochondrion. It carries out the reaction L-glutamate + NH4(+) + ATP = L-glutamine + ADP + phosphate + H(+). In Drosophila melanogaster (Fruit fly), this protein is Glutamine synthetase 1, mitochondrial (Gs1).